A 185-amino-acid polypeptide reads, in one-letter code: MISDIRKDAEVRMEKCVEAFKNQISKVRTGRASPSLLDGIIVEYYGTPTPLRQLASVTVEDTRTLKINVFDRSLGPAVEKAIMASDLGLNPSSAGTDIRVPLPALTEERRKELIKVVRGEAEGARVAVRNVRRDANDKVKALLKDKEISEDDDRRSQDDVQKLTDAAIKKLDAALADKEAELMQF.

The protein belongs to the RRF family.

The protein resides in the cytoplasm. Functionally, responsible for the release of ribosomes from messenger RNA at the termination of protein biosynthesis. May increase the efficiency of translation by recycling ribosomes from one round of translation to another. The chain is Ribosome-recycling factor from Enterobacter sp. (strain 638).